Consider the following 325-residue polypeptide: Glutarate 2-hydroxylase (325 aa).

3 residues coordinate Fe cation: histidine 160, aspartate 162, and histidine 292.

The protein belongs to the glutarate hydroxylase family. Homotetramer. The cofactor is Fe(2+).

It carries out the reaction glutarate + 2-oxoglutarate + O2 = (S)-2-hydroxyglutarate + succinate + CO2. It functions in the pathway amino-acid degradation. Functionally, acts as an alpha-ketoglutarate-dependent dioxygenase catalyzing hydroxylation of glutarate (GA) to L-2-hydroxyglutarate (L2HG). Functions in a L-lysine degradation pathway that proceeds via cadaverine, glutarate and L-2-hydroxyglutarate. This Escherichia coli O6:H1 (strain CFT073 / ATCC 700928 / UPEC) protein is Glutarate 2-hydroxylase.